The sequence spans 164 residues: Endoribonuclease YbeY (164 aa).

The Zn(2+) site is built by His-120, His-124, and His-130.

This sequence belongs to the endoribonuclease YbeY family. The cofactor is Zn(2+).

It is found in the cytoplasm. Single strand-specific metallo-endoribonuclease involved in late-stage 70S ribosome quality control and in maturation of the 3' terminus of the 16S rRNA. The protein is Endoribonuclease YbeY of Acidothermus cellulolyticus (strain ATCC 43068 / DSM 8971 / 11B).